Here is a 499-residue protein sequence, read N- to C-terminus: Probable dipeptidase B (499 aa).

The active site involves cysteine 26.

Belongs to the peptidase C69 family.

The catalysed reaction is an L-aminoacyl-L-amino acid + H2O = 2 an L-alpha-amino acid. The polypeptide is Probable dipeptidase B (pepDB) (Streptococcus pyogenes serotype M3 (strain ATCC BAA-595 / MGAS315)).